The following is a 253-amino-acid chain: Bridging integrator 3 (253 aa).

In terms of domain architecture, BAR spans 9 to 232; it reads GQPKKQIVSK…LDQPGHSDEH (224 aa). Coiled coils occupy residues 16–57 and 120–151; these read VSKT…AMSK and SLNM…KEKT.

It is found in the cytoplasm. It localises to the cytoskeleton. Functionally, involved in cytokinesis and septation where it has a role in the localization of F-actin. This Rattus norvegicus (Rat) protein is Bridging integrator 3 (Bin3).